A 221-amino-acid polypeptide reads, in one-letter code: Orotate phosphoribosyltransferase (221 aa).

5-phospho-alpha-D-ribose 1-diphosphate is bound at residue Lys26. An orotate-binding site is contributed by 34–35 (FF). 5-phospho-alpha-D-ribose 1-diphosphate-binding positions include 72-73 (YK), Arg98, Lys99, Lys102, His104, and 123-131 (DDVISAGTS). Positions 127 and 155 each coordinate orotate.

This sequence belongs to the purine/pyrimidine phosphoribosyltransferase family. PyrE subfamily. Homodimer. The cofactor is Mg(2+).

It catalyses the reaction orotidine 5'-phosphate + diphosphate = orotate + 5-phospho-alpha-D-ribose 1-diphosphate. It functions in the pathway pyrimidine metabolism; UMP biosynthesis via de novo pathway; UMP from orotate: step 1/2. Its function is as follows. Catalyzes the transfer of a ribosyl phosphate group from 5-phosphoribose 1-diphosphate to orotate, leading to the formation of orotidine monophosphate (OMP). This chain is Orotate phosphoribosyltransferase, found in Herminiimonas arsenicoxydans.